Here is a 325-residue protein sequence, read N- to C-terminus: Replication factor C small subunit (325 aa).

52–59 contributes to the ATP binding site; it reads GPAGVGKT.

This sequence belongs to the activator 1 small subunits family. RfcS subfamily. As to quaternary structure, heteromultimer composed of small subunits (RfcS) and large subunits (RfcL).

In terms of biological role, part of the RFC clamp loader complex which loads the PCNA sliding clamp onto DNA. The protein is Replication factor C small subunit of Natronomonas pharaonis (strain ATCC 35678 / DSM 2160 / CIP 103997 / JCM 8858 / NBRC 14720 / NCIMB 2260 / Gabara) (Halobacterium pharaonis).